A 413-amino-acid chain; its full sequence is Adenylosuccinate synthetase (413 aa).

Residues 11–17 (GDEGKGK) and 39–41 (GHT) each bind GTP. D12 functions as the Proton acceptor in the catalytic mechanism. Mg(2+) contacts are provided by D12 and G39. Residues 12 to 15 (DEGK), 37 to 40 (NAGH), T125, R139, Q217, T232, and R296 contribute to the IMP site. Residue H40 is the Proton donor of the active site. 292–298 (TTTGRPR) contacts substrate. GTP-binding positions include R298, 324–326 (KLD), and 402–404 (STG).

The protein belongs to the adenylosuccinate synthetase family. In terms of assembly, homodimer. The cofactor is Mg(2+).

The protein localises to the cytoplasm. It catalyses the reaction IMP + L-aspartate + GTP = N(6)-(1,2-dicarboxyethyl)-AMP + GDP + phosphate + 2 H(+). It participates in purine metabolism; AMP biosynthesis via de novo pathway; AMP from IMP: step 1/2. Functionally, plays an important role in the de novo pathway of purine nucleotide biosynthesis. Catalyzes the first committed step in the biosynthesis of AMP from IMP. In Nautilia profundicola (strain ATCC BAA-1463 / DSM 18972 / AmH), this protein is Adenylosuccinate synthetase.